We begin with the raw amino-acid sequence, 245 residues long: Protein ARV 1 (245 aa).

The next 5 helical transmembrane spans lie at 70 to 90, 117 to 137, 163 to 183, 200 to 220, and 224 to 244; these read INPA…AYLL, IKVL…FAIA, IFLL…FVDI, TMTR…LVGQ, and PTIF…FFRI.

This sequence belongs to the ARV1 family. As to expression, restricted to tissues in which cells are actively dividing or expanding. Mostly expressed in roots and flowers, and, to a lower extent, in stems and leaves.

The protein localises to the endoplasmic reticulum membrane. In terms of biological role, mediator of sterol homeostasis involved in sterol uptake, trafficking and distribution into membranes. Also regulates the sphingolipid metabolism. The protein is Protein ARV 1 of Arabidopsis thaliana (Mouse-ear cress).